The following is a 119-amino-acid chain: uncharacterized protein (119 aa).

A run of 2 helical transmembrane segments spans residues 57-77 (FSHH…SILF) and 80-100 (YIFV…FILH).

It localises to the membrane. This is an uncharacterized protein from Saccharomyces cerevisiae (strain ATCC 204508 / S288c) (Baker's yeast).